We begin with the raw amino-acid sequence, 131 residues long: Profilin-5 (131 aa).

A disulfide bridge connects residues Cys-13 and Cys-115. The Involved in PIP2 interaction motif lies at 81–97 (AVIRGKKGAGGITVKKT). Phosphothreonine is present on Thr-111.

This sequence belongs to the profilin family. In terms of assembly, occurs in many kinds of cells as a complex with monomeric actin in a 1:1 ratio. In terms of processing, phosphorylated by MAP kinases.

The protein resides in the cytoplasm. Its subcellular location is the cytoskeleton. Functionally, binds to actin and affects the structure of the cytoskeleton. At high concentrations, profilin prevents the polymerization of actin, whereas it enhances it at low concentrations. In Corylus avellana (European hazel), this protein is Profilin-5.